The sequence spans 62 residues: Large ribosomal subunit protein uL30 (62 aa).

Belongs to the universal ribosomal protein uL30 family. As to quaternary structure, part of the 50S ribosomal subunit.

This chain is Large ribosomal subunit protein uL30, found in Roseobacter denitrificans (strain ATCC 33942 / OCh 114) (Erythrobacter sp. (strain OCh 114)).